Consider the following 574-residue polypeptide: MPASLLRFLALAGTAVGLTTNHNHSPSCRVLPGDAAWPSSRDWAKLNKTLNGHLIATVPQASVCHKSPFGQYDAQACEELKSSWDISTITHVNAPGDVLSQNFQNYSCVPFTDPSQPCQLGNYPSYVVNVTGAADVQAALKFAQKHNVRIVIKNTGHDYLGKSTGKGALSLWMHNLKSTKFIKNYKAPYYKGPAAKLGAGVEGFEAYAMANSTGHRIVGGTCPTVGIVGGYTQGGGHSILSSSYGVAADNVLEWEVVTADGRHLVATPTRNSDLYWALSGGGGGTFAVVLSMTARLHRDGIVGGTLLGFNDSAVGNEVYWEAVAAFHALLPDFLDGGNSFTYSVGNNSLTAYGTMPGADRDAVDRLLRPFLDDLASRGITPVVQPRVSTNYYDHFFTYLGPAPYGNAAYFPFTNSRIIPRSLVTDPKSNAVVTDLFRNISQVPAFSPFYCDSFSVADKPHPANSLHPAWRTGMLLCAPAGSWDWDASPEEMAARDRYAAETLQPMMDAATPGGSVYLNEANHLYANWKESFYGDNYARLLRVKKKYDPDSVFYVKTGVGSEVWDVDATGRLCRA.

An N-terminal signal peptide occupies residues 1 to 17; sequence MPASLLRFLALAGTAVG. Cystine bridges form between C28-C572, C64-C77, C108-C118, and C450-C476. N-linked (GlcNAc...) asparagine glycosylation is present at N47. The N-linked (GlcNAc...) asparagine glycan is linked to N105. In terms of domain architecture, FAD-binding PCMH-type spans 120–299; it reads LGNYPSYVVN…LSMTARLHRD (180 aa). N-linked (GlcNAc...) asparagine glycans are attached at residues N129, N211, N310, N346, and N438. The 6-(S-cysteinyl)-8alpha-(pros-histidyl)-FAD (His-Cys) cross-link spans 157 to 222; the sequence is HDYLGKSTGK…TGHRIVGGTC (66 aa).

The protein belongs to the oxygen-dependent FAD-linked oxidoreductase family. FAD serves as cofactor. Post-translationally, the FAD cofactor is bound via a bicovalent 6-S-cysteinyl, 8alpha-N1-histidyl FAD linkage.

It localises to the secreted. In terms of biological role, probably oxidoreductase that, when reduced, rapidly reacts with molecular oxygen, a hallmark of flavoprotein oxidases. A large panel of alcohols, including carbohydrates, steroids and secondary alcohols were tested as potential substrates, but none has been identified so far. The chain is VAO-type flavoprotein oxidase VAO615 from Thermothelomyces thermophilus (strain ATCC 42464 / BCRC 31852 / DSM 1799) (Sporotrichum thermophile).